A 475-amino-acid chain; its full sequence is UDP-N-acetylmuramate--L-alanine ligase (475 aa).

Residue 119-125 participates in ATP binding; it reads GTHGKTT.

This sequence belongs to the MurCDEF family.

It is found in the cytoplasm. It catalyses the reaction UDP-N-acetyl-alpha-D-muramate + L-alanine + ATP = UDP-N-acetyl-alpha-D-muramoyl-L-alanine + ADP + phosphate + H(+). Its pathway is cell wall biogenesis; peptidoglycan biosynthesis. Cell wall formation. This chain is UDP-N-acetylmuramate--L-alanine ligase, found in Wigglesworthia glossinidia brevipalpis.